We begin with the raw amino-acid sequence, 871 residues long: DNA mismatch repair protein MutS (871 aa).

616–623 serves as a coordination point for ATP; the sequence is GPNMAGKS. Residues 801–825 form a disordered region; it reads ETEKTEESMEGTNLPKKKKEEKTSS.

This sequence belongs to the DNA mismatch repair MutS family.

This protein is involved in the repair of mismatches in DNA. It is possible that it carries out the mismatch recognition step. This protein has a weak ATPase activity. This Clostridium kluyveri (strain NBRC 12016) protein is DNA mismatch repair protein MutS.